The primary structure comprises 138 residues: uncharacterized protein (138 aa).

This is an uncharacterized protein from Thiocystis violacea.